The primary structure comprises 944 residues: Protein translocase subunit SecA (944 aa).

Residues Q87, 105–109 (GEGKT), and D494 contribute to the ATP site. Residues 894–944 (HAAAAGDGEEKPRPKQETVVRTQPKVGRNDPCPCGSGKKYKKCHGATEAAV) form a disordered region. Residues 901–911 (GEEKPRPKQET) are compositionally biased toward basic and acidic residues. Zn(2+)-binding residues include C925, C927, C936, and H937.

This sequence belongs to the SecA family. As to quaternary structure, monomer and homodimer. Part of the essential Sec protein translocation apparatus which comprises SecA, SecYEG and auxiliary proteins SecDF-YajC and YidC. Zn(2+) serves as cofactor.

The protein resides in the cell inner membrane. Its subcellular location is the cytoplasm. The enzyme catalyses ATP + H2O + cellular proteinSide 1 = ADP + phosphate + cellular proteinSide 2.. Part of the Sec protein translocase complex. Interacts with the SecYEG preprotein conducting channel. Has a central role in coupling the hydrolysis of ATP to the transfer of proteins into and across the cell membrane, serving as an ATP-driven molecular motor driving the stepwise translocation of polypeptide chains across the membrane. This Anaeromyxobacter sp. (strain Fw109-5) protein is Protein translocase subunit SecA.